A 134-amino-acid chain; its full sequence is Small ribosomal subunit protein uS9 (134 aa).

The interval 113-134 is disordered; that stretch reads REVERKKYGLKKARRAPQFSKR. Positions 120–134 are enriched in basic residues; that stretch reads YGLKKARRAPQFSKR.

This sequence belongs to the universal ribosomal protein uS9 family.

The sequence is that of Small ribosomal subunit protein uS9 (rpsI) from Thermotoga maritima (strain ATCC 43589 / DSM 3109 / JCM 10099 / NBRC 100826 / MSB8).